A 384-amino-acid chain; its full sequence is S-adenosylmethionine synthase (384 aa).

Residue His-15 participates in ATP binding. Asp-17 provides a ligand contact to Mg(2+). Glu-43 serves as a coordination point for K(+). Positions 56 and 99 each coordinate L-methionine. The tract at residues 99-109 (QSPDINQGVDR) is flexible loop. Residues 164 to 166 (DAK), 230 to 231 (RF), Asp-239, 245 to 246 (RK), Ala-262, and Lys-266 each bind ATP. Asp-239 provides a ligand contact to L-methionine. Residue Lys-270 participates in L-methionine binding.

The protein belongs to the AdoMet synthase family. As to quaternary structure, homotetramer; dimer of dimers. It depends on Mg(2+) as a cofactor. K(+) is required as a cofactor.

It is found in the cytoplasm. It catalyses the reaction L-methionine + ATP + H2O = S-adenosyl-L-methionine + phosphate + diphosphate. The protein operates within amino-acid biosynthesis; S-adenosyl-L-methionine biosynthesis; S-adenosyl-L-methionine from L-methionine: step 1/1. Its function is as follows. Catalyzes the formation of S-adenosylmethionine (AdoMet) from methionine and ATP. The overall synthetic reaction is composed of two sequential steps, AdoMet formation and the subsequent tripolyphosphate hydrolysis which occurs prior to release of AdoMet from the enzyme. The sequence is that of S-adenosylmethionine synthase from Salmonella agona (strain SL483).